The sequence spans 117 residues: Immunoglobulin lambda variable 1-47 (117 aa).

The N-terminal stretch at 1-19 (MAGFPLLLTLLTHCAGSWA) is a signal peptide. Gln-20 bears the Pyrrolidone carboxylic acid mark. Residues 20 to 44 (QSVLTQPPSASGTPGQRVTISCSGS) form a framework-1 region. One can recognise an Ig-like domain in the interval 20–117 (QSVLTQPPSA…CAAWDDSLSG (98 aa)). The cysteines at positions 41 and 108 are disulfide-linked. The interval 45–52 (SSNIGSNY) is complementarity-determining-1. Residues 53-69 (VYWYQQLPGTAPKLLIY) form a framework-2 region. The segment at 70–72 (SNN) is complementarity-determining-2. The segment at 73 to 108 (QRPSGVPDRFSGSKSGTSASLAISGLRSEDEADYYC) is framework-3. Positions 109–117 (AAWDDSLSG) are complementarity-determining-3.

As to quaternary structure, immunoglobulins are composed of two identical heavy chains and two identical light chains; disulfide-linked.

Its subcellular location is the secreted. The protein resides in the cell membrane. Functionally, v region of the variable domain of immunoglobulin light chains that participates in the antigen recognition. Immunoglobulins, also known as antibodies, are membrane-bound or secreted glycoproteins produced by B lymphocytes. In the recognition phase of humoral immunity, the membrane-bound immunoglobulins serve as receptors which, upon binding of a specific antigen, trigger the clonal expansion and differentiation of B lymphocytes into immunoglobulins-secreting plasma cells. Secreted immunoglobulins mediate the effector phase of humoral immunity, which results in the elimination of bound antigens. The antigen binding site is formed by the variable domain of one heavy chain, together with that of its associated light chain. Thus, each immunoglobulin has two antigen binding sites with remarkable affinity for a particular antigen. The variable domains are assembled by a process called V-(D)-J rearrangement and can then be subjected to somatic hypermutations which, after exposure to antigen and selection, allow affinity maturation for a particular antigen. This chain is Immunoglobulin lambda variable 1-47, found in Homo sapiens (Human).